The chain runs to 149 residues: Small ribosomal subunit protein bS6 (149 aa).

The disordered stretch occupies residues valine 93–alanine 149. The segment covering glycine 94–alanine 149 has biased composition (basic and acidic residues).

The protein belongs to the bacterial ribosomal protein bS6 family.

Its function is as follows. Binds together with bS18 to 16S ribosomal RNA. The protein is Small ribosomal subunit protein bS6 of Rhizobium meliloti (strain 1021) (Ensifer meliloti).